A 707-amino-acid chain; its full sequence is Polyribonucleotide nucleotidyltransferase (707 aa).

D486 and D492 together coordinate Mg(2+). One can recognise a KH domain in the interval P553–I612. The region spanning G622 to K690 is the S1 motif domain.

It belongs to the polyribonucleotide nucleotidyltransferase family. It depends on Mg(2+) as a cofactor.

It localises to the cytoplasm. The enzyme catalyses RNA(n+1) + phosphate = RNA(n) + a ribonucleoside 5'-diphosphate. Involved in mRNA degradation. Catalyzes the phosphorolysis of single-stranded polyribonucleotides processively in the 3'- to 5'-direction. In Sulfurihydrogenibium azorense (strain DSM 15241 / OCM 825 / Az-Fu1), this protein is Polyribonucleotide nucleotidyltransferase.